The primary structure comprises 263 residues: Taurine import ATP-binding protein TauB (263 aa).

Residues Leu-4–Ser-235 enclose the ABC transporter domain. Residue Gly-40–Ser-47 participates in ATP binding.

Belongs to the ABC transporter superfamily. Taurine importer (TC 3.A.1.17.1) family. In terms of assembly, the complex is composed of two ATP-binding proteins (TauB), two transmembrane proteins (TauC) and a solute-binding protein (TauA).

Its subcellular location is the cell inner membrane. It catalyses the reaction taurine(out) + ATP + H2O = taurine(in) + ADP + phosphate + H(+). Its function is as follows. Part of the ABC transporter complex TauABC involved in taurine import. Responsible for energy coupling to the transport system. The polypeptide is Taurine import ATP-binding protein TauB (Pseudomonas aeruginosa (strain UCBPP-PA14)).